A 567-amino-acid chain; its full sequence is Urease subunit alpha (567 aa).

Residues 129 to 567 form the Urease domain; that stretch reads GGIDTHIHWI…LPMAQRYFLF (439 aa). H134, H136, and K217 together coordinate Ni(2+). Position 217 is an N6-carboxylysine (K217). Substrate is bound at residue H219. Ni(2+) is bound by residues H246 and H272. The active-site Proton donor is H320. Position 360 (D360) interacts with Ni(2+).

This sequence belongs to the metallo-dependent hydrolases superfamily. Urease alpha subunit family. In terms of assembly, heterotrimer of UreA (gamma), UreB (beta) and UreC (alpha) subunits. Three heterotrimers associate to form the active enzyme. The apoenzyme interacts with an accessory complex composed of UreD, UreF and UreG, which is required for the assembly of the nickel containing metallocenter of UreC. The UreE protein may also play a direct role as a metallochaperone in nickel transfer to the urease apoprotein. Requires Ni cation as cofactor. Post-translationally, carboxylation allows a single lysine to coordinate two nickel ions.

The protein localises to the cytoplasm. The catalysed reaction is urea + 2 H2O + H(+) = hydrogencarbonate + 2 NH4(+). The protein operates within nitrogen metabolism; urea degradation; CO(2) and NH(3) from urea (urease route): step 1/1. Its activity is regulated as follows. The apoenzyme can be activated in vitro in the presence of nickel ions and carbon dioxide, which promotes carboxylation of Lys-217. The chain is Urease subunit alpha from Klebsiella aerogenes (Enterobacter aerogenes).